A 260-amino-acid chain; its full sequence is MADDRHGIDDIDGETLDAVAEALRTAETAVALTGAGVSTASGIPSFRGDDGIWERHDPADFHRRRLDADPAGFWADRLSLREAIYGDIDPEPNAAHEALAALEADGHLDAVLTQNIDGLHDAAGTDRVVELHGTHRRVVCDDCGHRRDAEVVFEQAAESSDLPPRCDCGGVYRPDVVLFGEPMPDVAMNEAQRLARDSDVFLAVGSSLSVQPASLLPKIAAEGDSTLVVVNYEETPRDASAAHVLRADVTQVLPAIVERL.

Residues 9–260 (DDIDGETLDA…QVLPAIVERL (252 aa)) form the Deacetylase sirtuin-type domain. The NAD(+) site is built by Ala35, Thr39, Phe46, Arg47, Gln114, Ile116, Asp117, and His132. A nicotinamide-binding site is contributed by Phe46. Nicotinamide is bound by residues Ile116 and Asp117. His132 functions as the Proton acceptor in the catalytic mechanism. The Zn(2+) site is built by Cys140, Cys143, Cys166, and Cys168. Residues Ser206, Ser207, Asn231, Asp248, and Val249 each coordinate NAD(+).

The protein belongs to the sirtuin family. Class U subfamily. Zn(2+) serves as cofactor.

The protein localises to the cytoplasm. It carries out the reaction N(6)-acetyl-L-lysyl-[protein] + NAD(+) + H2O = 2''-O-acetyl-ADP-D-ribose + nicotinamide + L-lysyl-[protein]. Its function is as follows. NAD-dependent protein deacetylase which modulates the activities of several enzymes which are inactive in their acetylated form. Deacetylates the N-terminal lysine residue of Alba, the major archaeal chromatin protein and that, in turn, increases Alba's DNA binding affinity, thereby repressing transcription. The sequence is that of NAD-dependent protein deacetylase from Haloarcula marismortui (strain ATCC 43049 / DSM 3752 / JCM 8966 / VKM B-1809) (Halobacterium marismortui).